We begin with the raw amino-acid sequence, 246 residues long: Dehydration-responsive element-binding protein 1H (246 aa).

Positions 1–43 are disordered; sequence MDMAGHEVNSSSSSSGAESSSSSSGRQQYKKRPAGRTKFRETR. Residues 10–24 are compositionally biased toward low complexity; the sequence is SSSSSSGAESSSSSS. Positions 28 to 37 are enriched in basic residues; the sequence is QYKKRPAGRT. A DNA-binding region (AP2/ERF) is located at residues 46 to 110; it reads VYRGVRRRGG…GGGAACLNFQ (65 aa). The interval 155–187 is disordered; the sequence is AMDEATSGVSAPPPLANNAGSSETPGPSSIDGT. Over residues 172 to 181 the composition is skewed to polar residues; sequence NAGSSETPGP.

This sequence belongs to the AP2/ERF transcription factor family. ERF subfamily.

Its subcellular location is the nucleus. Its function is as follows. Transcriptional activator that binds specifically to the DNA sequence 5'-[AG]CCGAC-3'. Binding to the C-repeat/DRE element mediates high salinity- and dehydration-inducible transcription. The polypeptide is Dehydration-responsive element-binding protein 1H (DREB1H) (Oryza sativa subsp. indica (Rice)).